The primary structure comprises 84 residues: Large ribosomal subunit protein bL27 (84 aa).

The segment covering 1–11 (MATTKAGGSTK) has biased composition (polar residues). The disordered stretch occupies residues 1 to 20 (MATTKAGGSTKNGRDSHSKR).

Belongs to the bacterial ribosomal protein bL27 family.

The protein is Large ribosomal subunit protein bL27 of Mycoplasmopsis synoviae (strain 53) (Mycoplasma synoviae).